The chain runs to 296 residues: uncharacterized protein (296 aa).

2 disordered regions span residues 1-45 (MSAT…LGEN) and 200-296 (EQVV…SESE). Residues 201–220 (QVVDDYPADSDDDTDAESDD) show a composition bias toward acidic residues. Residues 236–249 (SSVSSCGSFITDGS) show a composition bias toward polar residues. Residues 250–296 (GSEESEDSASDETDDSDFDTDELTSESEEEESESESESESESESESE) are compositionally biased toward acidic residues.

This is an uncharacterized protein from Ictaluridae (bullhead catfishes).